Here is a 167-residue protein sequence, read N- to C-terminus: MLPMITGFMNYGQQTLRAARYIGQGFMITLSHTNRLPVTIQYPYEKLITSERFRGRIHFEFDKCIACEVCVRVCPIDLPVVDWKLETNIRKKRLLNYSIDFGICIFCGNCVEYCPTNCLSMTEEYEFSTYDRHELNYNQIALGRLPMSVIDDYTIRTILNSPQTING.

2 consecutive 4Fe-4S ferredoxin-type domains span residues 55-84 (GRIH…VDWK) and 95-124 (LNYS…MTEE). [4Fe-4S] cluster is bound by residues Cys-64, Cys-67, Cys-70, Cys-74, Cys-104, Cys-107, Cys-110, and Cys-114.

The protein belongs to the complex I 23 kDa subunit family. As to quaternary structure, NDH is composed of at least 16 different subunits, 5 of which are encoded in the nucleus. [4Fe-4S] cluster is required as a cofactor.

The protein resides in the plastid. It localises to the chloroplast thylakoid membrane. The catalysed reaction is a plastoquinone + NADH + (n+1) H(+)(in) = a plastoquinol + NAD(+) + n H(+)(out). It catalyses the reaction a plastoquinone + NADPH + (n+1) H(+)(in) = a plastoquinol + NADP(+) + n H(+)(out). Functionally, NDH shuttles electrons from NAD(P)H:plastoquinone, via FMN and iron-sulfur (Fe-S) centers, to quinones in the photosynthetic chain and possibly in a chloroplast respiratory chain. The immediate electron acceptor for the enzyme in this species is believed to be plastoquinone. Couples the redox reaction to proton translocation, and thus conserves the redox energy in a proton gradient. The chain is NAD(P)H-quinone oxidoreductase subunit I, chloroplastic from Barbarea verna (Land cress).